The chain runs to 114 residues: Nucleoid-associated protein CKL_3826 (114 aa).

The protein belongs to the YbaB/EbfC family. In terms of assembly, homodimer.

It is found in the cytoplasm. The protein resides in the nucleoid. Its function is as follows. Binds to DNA and alters its conformation. May be involved in regulation of gene expression, nucleoid organization and DNA protection. This Clostridium kluyveri (strain ATCC 8527 / DSM 555 / NBRC 12016 / NCIMB 10680 / K1) protein is Nucleoid-associated protein CKL_3826.